The chain runs to 213 residues: Achelase-1 (213 aa).

The Peptidase S1 domain maps to 1-213 (IVGGSVTTIG…RYTSWIQSNA (213 aa)). A disulfide bond links Cys-26 and Cys-42. Active-site charge relay system residues include His-41 and Asp-86. Cys-155 and Cys-172 form a disulfide bridge. Ser-188 (charge relay system) is an active-site residue.

This sequence belongs to the peptidase S1 family. Hemolymph and saliva of the larval form (caterpillar).

The protein resides in the secreted. Its subcellular location is the extracellular space. Sensitive to serine proteinase inhibitors and thiol proteinase inhibitors. Fibrinolytic activity; shows preferential cleavage of Arg-Gly bonds in all three fibrinogen chains. Contact with the caterpillars causes severe bleeding, due the anticoagulant effect of the protein. The polypeptide is Achelase-1 (Lonomia achelous (Giant silkworm moth)).